The primary structure comprises 459 residues: Heat stress transcription factor A-4d (459 aa).

Positions 127–189 (AESERRELEE…QKNIVASLCE (63 aa)) form a coiled coil. Positions 141–191 (LKYEKSILVADLQRQNQQQYVINWQMQAMEGRLVAMEQRQKNIVASLCEML) are hydrophobic repeat HR-A/B. A Nuclear localization signal motif is present at residues 209–213 (SKKRR). Over residues 364–388 (YPTQADVNSEIASSTDTSQDGTSET) the composition is skewed to polar residues. The interval 364 to 398 (YPTQADVNSEIASSTDTSQDGTSETEASHGPTNDV) is disordered. The short motif at 397 to 406 (DVFWERFLTE) is the AHA element.

Belongs to the HSF family. Class A subfamily. As to quaternary structure, homotrimer. Exhibits temperature-dependent phosphorylation.

The protein localises to the nucleus. Its function is as follows. Transcriptional regulator that specifically binds DNA of heat shock promoter elements (HSE). The polypeptide is Heat stress transcription factor A-4d (HSFA4D) (Oryza sativa subsp. japonica (Rice)).